The following is a 337-amino-acid chain: Methylthioribose-1-phosphate isomerase (337 aa).

Residues 47–49 (RGA), Arg-81, and Gln-184 each bind substrate. Asp-225 acts as the Proton donor in catalysis. 235–236 (NK) is a substrate binding site.

Belongs to the eIF-2B alpha/beta/delta subunits family. MtnA subfamily.

It catalyses the reaction 5-(methylsulfanyl)-alpha-D-ribose 1-phosphate = 5-(methylsulfanyl)-D-ribulose 1-phosphate. The protein operates within amino-acid biosynthesis; L-methionine biosynthesis via salvage pathway; L-methionine from S-methyl-5-thio-alpha-D-ribose 1-phosphate: step 1/6. Its function is as follows. Catalyzes the interconversion of methylthioribose-1-phosphate (MTR-1-P) into methylthioribulose-1-phosphate (MTRu-1-P). In Synechococcus sp. (strain CC9605), this protein is Methylthioribose-1-phosphate isomerase.